The chain runs to 129 residues: Phosphoribosyl-AMP cyclohydrolase (129 aa).

A Mg(2+)-binding site is contributed by Asp-77. A Zn(2+)-binding site is contributed by Cys-78. Mg(2+)-binding residues include Asp-79 and Asp-81. 2 residues coordinate Zn(2+): Cys-94 and Cys-101.

The protein belongs to the PRA-CH family. As to quaternary structure, homodimer. Mg(2+) serves as cofactor. Requires Zn(2+) as cofactor.

Its subcellular location is the cytoplasm. It catalyses the reaction 1-(5-phospho-beta-D-ribosyl)-5'-AMP + H2O = 1-(5-phospho-beta-D-ribosyl)-5-[(5-phospho-beta-D-ribosylamino)methylideneamino]imidazole-4-carboxamide. Its pathway is amino-acid biosynthesis; L-histidine biosynthesis; L-histidine from 5-phospho-alpha-D-ribose 1-diphosphate: step 3/9. In terms of biological role, catalyzes the hydrolysis of the adenine ring of phosphoribosyl-AMP. This Methanosphaera stadtmanae (strain ATCC 43021 / DSM 3091 / JCM 11832 / MCB-3) protein is Phosphoribosyl-AMP cyclohydrolase.